The sequence spans 63 residues: Synergistic-type venom protein C9S3, chain 2 (63 aa).

Disulfide bonds link C3–C24, C17–C42, and C46–C57.

This sequence belongs to the three-finger toxin family. Short-chain subfamily. Aminergic toxin sub-subfamily. In terms of assembly, heterodimer of C9S3 chain 1 (AC P01408) and chain 2, linked by at least two disulfide bonds. As to expression, expressed by the venom gland.

Its subcellular location is the secreted. Functionally, this protein shows a synergetic toxic effect in that it enhances the toxicity of other D.angusticeps toxins. The sequence is that of Synergistic-type venom protein C9S3, chain 2 from Dendroaspis angusticeps (Eastern green mamba).